We begin with the raw amino-acid sequence, 146 residues long: Hemoglobin subunit beta (146 aa).

The residue at position 1 (V1) is an N-acetylvaline. The Globin domain maps to 2–146 (HLTGEEKSAV…VANALAHKYH (145 aa)). A Phosphothreonine modification is found at T12. S44 carries the phosphoserine modification. An N6-acetyllysine modification is found at K59. H63 contacts heme b. N6-acetyllysine is present on K82. Residue H92 coordinates heme b. Residue C93 is modified to S-nitrosocysteine. An N6-acetyllysine modification is found at K144.

This sequence belongs to the globin family. As to quaternary structure, heterotetramer of two alpha chains and two beta chains. As to expression, red blood cells.

Functionally, involved in oxygen transport from the lung to the various peripheral tissues. The chain is Hemoglobin subunit beta (HBB) from Nycticebus coucang (Slow loris).